Here is a 324-residue protein sequence, read N- to C-terminus: Anthranilate phosphoribosyltransferase (324 aa).

Residues glycine 72, glycine 75–aspartate 76, serine 80, asparagine 82–threonine 85, lysine 99–serine 107, and serine 111 contribute to the 5-phospho-alpha-D-ribose 1-diphosphate site. Glycine 72 serves as a coordination point for anthranilate. Serine 84 is a Mg(2+) binding site. Position 102 (asparagine 102) interacts with anthranilate. Arginine 157 lines the anthranilate pocket. Residues aspartate 215 and glutamate 216 each coordinate Mg(2+).

Belongs to the anthranilate phosphoribosyltransferase family. Homodimer. Requires Mg(2+) as cofactor.

It carries out the reaction N-(5-phospho-beta-D-ribosyl)anthranilate + diphosphate = 5-phospho-alpha-D-ribose 1-diphosphate + anthranilate. Its pathway is amino-acid biosynthesis; L-tryptophan biosynthesis; L-tryptophan from chorismate: step 2/5. Catalyzes the transfer of the phosphoribosyl group of 5-phosphorylribose-1-pyrophosphate (PRPP) to anthranilate to yield N-(5'-phosphoribosyl)-anthranilate (PRA). This Pyrococcus abyssi (strain GE5 / Orsay) protein is Anthranilate phosphoribosyltransferase.